The following is a 346-amino-acid chain: Endosome-associated-trafficking regulator 1 (346 aa).

Polar residues predominate over residues 46–67 (FVSSNSKRAFSKDSNQSTTQFR). 3 disordered regions span residues 46 to 77 (FVSSNSKRAFSKDSNQSTTQFRGPSECPDGNL), 93 to 129 (LQEDEDDDWSGSYHPSVIENTHGPKVPSPAGTDGDES), and 153 to 173 (SPPAGLHGKTQHRPDSTSDSE). Residues 170-317 (SDSEEGLRLL…SGAQSSIKQL (148 aa)) adopt a coiled-coil conformation.

Belongs to the ENTR1 family.

The protein localises to the cytoplasm. It is found in the early endosome. Its subcellular location is the endosome. It localises to the recycling endosome. The protein resides in the midbody. The protein localises to the cytoskeleton. It is found in the microtubule organizing center. Its subcellular location is the centrosome. It localises to the cilium basal body. In terms of biological role, endosome-associated protein that plays a role in membrane receptor sorting, cytokinesis and ciliogenesis. This chain is Endosome-associated-trafficking regulator 1, found in Xenopus tropicalis (Western clawed frog).